Here is a 444-residue protein sequence, read N- to C-terminus: MQENYKGKAYDILKNLNIEEGDLIEIKKGDLRIRGILLPSYSKDDRIFVIKLDNGYNIGISIDNITEIKPIEKKSSKDRESERREVHNGAKSEIKIISTGGTIVSRVEYETGAVRPALTTEEIIQFLPEINEIAKVDAEVLFSILSENMKPEFWVKIAESVKKAFDEGNTGIVIAHGTDTMAYTASALAFSLRSLQGPVVLVGSQRSSDRPSSDSAINLLSAVITAKYAPFGEVVVNMHAESSDTYALVHRGVKVRKMHSSRRDAFQSVNDKPLAKVLWKERKLVMLNEKYISKKDETLLDAKFDNRVFLLYYYPGLDRDFLEQMLTNTKIRGIIIAGTGLGHTSSDHIELFRKATKDGIFIGMTTQCLFGRVNMNVYTTGRQLLDAGVTPLEDMLPEVALVKLMWVLAHEQDLEKIQNLMITNLVGEINPRHTLDLFPRWSYE.

In terms of domain architecture, Asparaginase/glutaminase spans 92–424 (SEIKIISTGG…EKIQNLMITN (333 aa)). Active-site residues include Thr-102, Thr-178, Asp-179, and Lys-257.

The protein belongs to the asparaginase 1 family. GatD subfamily. Heterodimer of GatD and GatE.

The catalysed reaction is L-glutamyl-tRNA(Gln) + L-glutamine + ATP + H2O = L-glutaminyl-tRNA(Gln) + L-glutamate + ADP + phosphate + H(+). Its function is as follows. Allows the formation of correctly charged Gln-tRNA(Gln) through the transamidation of misacylated Glu-tRNA(Gln) in organisms which lack glutaminyl-tRNA synthetase. The reaction takes place in the presence of glutamine and ATP through an activated gamma-phospho-Glu-tRNA(Gln). The GatDE system is specific for glutamate and does not act on aspartate. This is Glutamyl-tRNA(Gln) amidotransferase subunit D from Saccharolobus solfataricus (strain ATCC 35092 / DSM 1617 / JCM 11322 / P2) (Sulfolobus solfataricus).